The chain runs to 209 residues: ATP-dependent Clp protease proteolytic subunit 1 (209 aa).

Ser109 acts as the Nucleophile in catalysis. His134 is an active-site residue.

The protein belongs to the peptidase S14 family. Fourteen ClpP subunits assemble into 2 heptameric rings which stack back to back to give a disk-like structure with a central cavity, resembling the structure of eukaryotic proteasomes.

The protein resides in the cytoplasm. It carries out the reaction Hydrolysis of proteins to small peptides in the presence of ATP and magnesium. alpha-casein is the usual test substrate. In the absence of ATP, only oligopeptides shorter than five residues are hydrolyzed (such as succinyl-Leu-Tyr-|-NHMec, and Leu-Tyr-Leu-|-Tyr-Trp, in which cleavage of the -Tyr-|-Leu- and -Tyr-|-Trp bonds also occurs).. Its function is as follows. Cleaves peptides in various proteins in a process that requires ATP hydrolysis. Has a chymotrypsin-like activity. Plays a major role in the degradation of misfolded proteins. This chain is ATP-dependent Clp protease proteolytic subunit 1, found in Corynebacterium diphtheriae (strain ATCC 700971 / NCTC 13129 / Biotype gravis).